A 408-amino-acid polypeptide reads, in one-letter code: Argininosuccinate synthase (408 aa).

Residues 12-20 (AYSGGLDTS) and A39 each bind ATP. Y92 and S97 together coordinate L-citrulline. G122 lines the ATP pocket. L-aspartate-binding residues include T124, N128, and D129. Position 128 (N128) interacts with L-citrulline. L-citrulline contacts are provided by R132, S183, S192, E268, and Y280.

Belongs to the argininosuccinate synthase family. Type 1 subfamily. As to quaternary structure, homotetramer.

The protein localises to the cytoplasm. The enzyme catalyses L-citrulline + L-aspartate + ATP = 2-(N(omega)-L-arginino)succinate + AMP + diphosphate + H(+). The protein operates within amino-acid biosynthesis; L-arginine biosynthesis; L-arginine from L-ornithine and carbamoyl phosphate: step 2/3. In Caulobacter vibrioides (strain ATCC 19089 / CIP 103742 / CB 15) (Caulobacter crescentus), this protein is Argininosuccinate synthase.